Here is a 73-residue protein sequence, read N- to C-terminus: Homeodomain-only protein (73 aa).

A DNA-binding region (homeobox; degenerate) is located at residues 3-62 (TEKSVTPTEEQLEILEYNFCKVNKHPDPTTLCLIAAETGLSEEQTLKWFKQRLAEWRKSE).

It localises to the nucleus. It is found in the cytoplasm. Its function is as follows. Atypical homeodomain protein which does not bind DNA and is required to modulate cardiac growth and development. May act via an interaction with SRF, leading to modulate the expression of SRF-dependent cardiac-specific genes and cardiac development. May act as a co-chaperone for HSPA1A and HSPA1B chaperone proteins and assist in chaperone-mediated protein refolding. This is Homeodomain-only protein (HOPX) from Gallus gallus (Chicken).